Consider the following 235-residue polypeptide: Transcription factor hepR (235 aa).

Positions 14–45 are disordered; sequence QNSPESSRDVLSMASPGLLPIDPSPEHDETNK. The C2H2-type zinc finger occupies 175–205; sequence IQCPCLDERGERCSRMFSRLDNMRDHVRRIH.

It localises to the nucleus. Functionally, transcription factor; part of the gene cluster that mediates the biosynthesis of heptelidic acid (HA), a sesquiterpene lactone that acts as an inhibitor of glyceraldehyde-3-phosphatedehydrogenase (GAPDH) and a growth inhibitor of the salt-tolerant lactic acid bacteria in soy sauce brewing. Both hepR and hepS regulate the transcription of the heptelidic acid cluster, but they are not involved in mutual transcriptional regulation and act with different mechanisms. The sequence is that of Transcription factor hepR from Aspergillus oryzae (strain ATCC 42149 / RIB 40) (Yellow koji mold).